We begin with the raw amino-acid sequence, 587 residues long: Phosphatidylinositol-3-phosphatase SAC1 (587 aa).

The Cytoplasmic portion of the chain corresponds to 1–520 (MAATTYERLK…SPLSVPRDLK (520 aa)). Residues 122 to 451 (MNHVLSMDGF…ANACAKQYAG (330 aa)) enclose the SAC domain. Positions 452–587 (TGALKTDFTR…PRLVQKEKID (136 aa)) are essential for phosphatidylinositol-4-phosphate phosphatase activity. Lysine 456 is subject to N6-acetyllysine. The chain crosses the membrane as a helical span at residues 521–541 (FLALPIIMVVAFSMCIICLLM). Over 542–548 (AGDTWTE) the chain is Lumenal. Residues 549–569 (TLAYVLFWGVASIGTFFIILY) traverse the membrane as a helical segment. Residues 570-587 (NGKDFVDAPRLVQKEKID) are Cytoplasmic-facing.

Interacts with TMEM39A. Interacts with SEC23A and SEC24A; this interaction is reduced in the absence of TMEM39A. Interacts with PLEKHA3 and VAPA and/or VAPB to form a ternary complex.

The protein localises to the endoplasmic reticulum membrane. It is found in the golgi apparatus membrane. It carries out the reaction a 1,2-diacyl-sn-glycero-3-phospho-(1D-myo-inositol-3-phosphate) + H2O = a 1,2-diacyl-sn-glycero-3-phospho-(1D-myo-inositol) + phosphate. The catalysed reaction is a 1,2-diacyl-sn-glycero-3-phospho-(1D-myo-inositol 4-phosphate) + H2O = a 1,2-diacyl-sn-glycero-3-phospho-(1D-myo-inositol) + phosphate. Phosphoinositide phosphatase which catalyzes the hydrolysis of phosphatidylinositol 4-phosphate (PtdIns(4)P), phosphatidylinositol 3-phosphate (PtdIns(3)P) and has low activity towards phosphatidylinositol-3,5-bisphosphate (PtdIns(3,5)P2). Shows a very robust PtdIns(4)P phosphatase activity when it binds PtdIns(4)P in a 'cis' configuration in the cellular environment, with much less activity seen when it binds PtdIns(4)P in 'trans' configuration. PtdIns(4)P phosphatase activity (when it binds PtdIns(4)P in 'trans' configuration) is enhanced in the presence of PLEKHA3. This Bos taurus (Bovine) protein is Phosphatidylinositol-3-phosphatase SAC1 (SACM1L).